The chain runs to 262 residues: Ribosomal RNA small subunit methyltransferase A (262 aa).

S-adenosyl-L-methionine contacts are provided by Asn14, Leu16, Gly41, Glu62, Asp87, and Asn109.

It belongs to the class I-like SAM-binding methyltransferase superfamily. rRNA adenine N(6)-methyltransferase family. RsmA subfamily.

It localises to the cytoplasm. The enzyme catalyses adenosine(1518)/adenosine(1519) in 16S rRNA + 4 S-adenosyl-L-methionine = N(6)-dimethyladenosine(1518)/N(6)-dimethyladenosine(1519) in 16S rRNA + 4 S-adenosyl-L-homocysteine + 4 H(+). Its function is as follows. Specifically dimethylates two adjacent adenosines (A1518 and A1519) in the loop of a conserved hairpin near the 3'-end of 16S rRNA in the 30S particle. May play a critical role in biogenesis of 30S subunits. The chain is Ribosomal RNA small subunit methyltransferase A from Francisella tularensis subsp. tularensis (strain FSC 198).